The chain runs to 275 residues: MSEQQIDLQHQANVIRKLTLEEIGKLGVGHVGGSLSICEVLAALYFRLMKIDPHNPGWPERDRLVLSKGHGGPALYAALALKGYFPIELLDTLNRPGTMLPSHCDMRRTVGIDMTTGSLGQGFSAAVGMALAVQMDHLPNTIYTIIGDGESDEGQIWEAAMFAGGRRLDHLIAFTDYNKMQIDGYTQEINPLEPLEDKWRAFGWHVQSIDGHNTDEIVSAVEQAKRAQGKPSMILLNTIKGKGASFSEGKLASHNMKLTEEMWKAAVAELEKEGA.

The protein belongs to the transketolase family. As to quaternary structure, forms a complex with SqwH. Thiamine diphosphate serves as cofactor.

It carries out the reaction 6-deoxy-6-sulfo-D-fructose + D-glyceraldehyde 3-phosphate = 4-deoxy-4-sulfo-D-erythrose + D-xylulose 5-phosphate. The catalysed reaction is 4-deoxy-4-sulfo-D-erythrulose + D-glyceraldehyde 3-phosphate = sulfoacetaldehyde + D-xylulose 5-phosphate. Part of the sulfo-TK pathway, a D-sulfoquinovose degradation pathway that produces 2-hydroxyethane-1-sulfonate (isethionate). Catalyzes two steps of the pathway: the formation of 4-deoxy-4-sulfoerythrose (SE) and xylulose 5-phosphate from 6-deoxy-6-sulfo-D-fructose (SF) and glyceraldehyde 3-phosphate, and the formation of sulfoacetaldehyde (SA) and xylulose 5-phosphate from 4-deoxy-4-sulfo-D-erythrulose (SEu) and glyceraldehyde 3-phosphate. This is 6-deoxy-6-sulfo-D-fructose transketolase subunit SqwG from Clostridium sp. (strain MSTE9).